A 148-amino-acid chain; its full sequence is MPSTIFVLNGPNLNALGKREPGIYGGKTLADIEAMCKEEAKLLGFDVDFRQSNHEGTLVDWLHEAGEKAVGIAINPAAYGHTSIAMHDAIRAITVPVVELHLSNIHAREEFRHKSMIAPAVKGVICGFGAQSYILALHALKNLTEKSK.

Residue Y24 is the Proton acceptor of the active site. Substrate is bound by residues N75, H81, and D88. H101 acts as the Proton donor in catalysis. Substrate is bound by residues 102-103 and R112; that span reads LS.

Belongs to the type-II 3-dehydroquinase family. In terms of assembly, homododecamer.

The catalysed reaction is 3-dehydroquinate = 3-dehydroshikimate + H2O. Its pathway is metabolic intermediate biosynthesis; chorismate biosynthesis; chorismate from D-erythrose 4-phosphate and phosphoenolpyruvate: step 3/7. In terms of biological role, catalyzes a trans-dehydration via an enolate intermediate. The chain is 3-dehydroquinate dehydratase from Rhizobium meliloti (strain 1021) (Ensifer meliloti).